The chain runs to 123 residues: Protein Wnt-3b (123 aa).

The O-palmitoleoyl serine; by PORCN moiety is linked to residue Ser-1. Cys-89 and Cys-104 are joined by a disulfide. N-linked (GlcNAc...) asparagine glycosylation occurs at Asn-90.

Belongs to the Wnt family. In terms of processing, palmitoleoylation is required for efficient binding to frizzled receptors. Depalmitoleoylation leads to Wnt signaling pathway inhibition.

The protein localises to the secreted. It localises to the extracellular space. It is found in the extracellular matrix. Functionally, ligand for members of the frizzled family of seven transmembrane receptors. Probable developmental protein. May be a signaling molecule which affects the development of discrete regions of tissues. Is likely to signal over only few cell diameters. In Plethodon jordani (Red-cheeked salamander), this protein is Protein Wnt-3b (WNT-3B).